A 393-amino-acid chain; its full sequence is Na(+)/H(+) antiporter NhaA 1 (393 aa).

Helical transmembrane passes span 23-43 (AGGVSLMVAAALALIVANSPF), 58-78 (LSLTDWINDALMAVFFLLVGL), 96-116 (MLPGIAAAGGVILPAIIFTAF), 126-146 (GWAVPSATDIAFALGVLSLLG), 155-175 (VFLATLAILDDLAAVVIIAIF), 178-198 (AEISMPYLGGAFAAAIVLFVM), 224-244 (GVHATVAGVVTALMIPLKAAP), 265-285 (VAFIIVPIFGFANAGISFAGL), 298-318 (IMLGLFIGKQLGVFGAAWLAI), 334-354 (LYGVAVLCGIGFTMSIFIGLL), and 367-387 (IGVLAGSGLSAICGYILLRLV).

Belongs to the NhaA Na(+)/H(+) (TC 2.A.33) antiporter family.

It localises to the cell inner membrane. The catalysed reaction is Na(+)(in) + 2 H(+)(out) = Na(+)(out) + 2 H(+)(in). In terms of biological role, na(+)/H(+) antiporter that extrudes sodium in exchange for external protons. In Brucella anthropi (strain ATCC 49188 / DSM 6882 / CCUG 24695 / JCM 21032 / LMG 3331 / NBRC 15819 / NCTC 12168 / Alc 37) (Ochrobactrum anthropi), this protein is Na(+)/H(+) antiporter NhaA 1.